The primary structure comprises 84 residues: Cytochrome c oxidase subunit 12, mitochondrial (84 aa).

One can recognise a CHCH domain in the interval threonine 27–tryptophan 70. Positions cysteine 30–cysteine 40 match the Cx9C motif motif. Intrachain disulfides connect cysteine 30–cysteine 62 and cysteine 40–cysteine 51. The short motif at cysteine 51–cysteine 62 is the Cx10C motif element.

It belongs to the cytochrome c oxidase subunit 6B family. Component of the cytochrome c oxidase (complex IV, CIV), a multisubunit enzyme composed of 11 subunits. The complex is composed of a catalytic core of 3 subunits Cox1, Cox2 and Cox3, encoded in the mitochondrial DNA, and 8 supernumerary subunits Cox4, Cox5a/Cox5, Cox6, Cox7, Cox8, Cox7a/Cox9, Cox6b/Cox12 and Cox6a/Cox13, which are encoded in the nuclear genome. The complex exists as a monomer or a dimer and forms respiratory supercomplexes (SCs) in the inner mitochondrial membrane with NADH-ubiquinone oxidoreductase (complex I, CI) and ubiquinol-cytochrome c oxidoreductase (cytochrome b-c1 complex, complex III, CIII), resulting in various different assemblies (supercomplexes I(1)IV(1), I(1)III(3)IV(2), III(2)IV(1) and III(2)IV(2) as well as larger supercomplexes of compositions like I(1)III(2)IV(5-6)).

The protein localises to the mitochondrion inner membrane. It participates in energy metabolism; oxidative phosphorylation. Its function is as follows. Component of the cytochrome c oxidase, the last enzyme in the mitochondrial electron transport chain which drives oxidative phosphorylation. The respiratory chain contains 3 multisubunit complexes succinate dehydrogenase (complex II, CII), ubiquinol-cytochrome c oxidoreductase (cytochrome b-c1 complex, complex III, CIII) and cytochrome c oxidase (complex IV, CIV), that cooperate to transfer electrons derived from NADH and succinate to molecular oxygen, creating an electrochemical gradient over the inner membrane that drives transmembrane transport and the ATP synthase. Cytochrome c oxidase is the component of the respiratory chain that catalyzes the reduction of oxygen to water. Electrons originating from reduced cytochrome c in the intermembrane space (IMS) are transferred via the dinuclear copper A center (CU(A)) of Cox2 and heme A of Cox1 to the active site in Cox1, a binuclear center (BNC) formed by heme A3 and copper B (CU(B)). The BNC reduces molecular oxygen to 2 water molecules using 4 electrons from cytochrome c in the IMS and 4 protons from the mitochondrial matrix. This is Cytochrome c oxidase subunit 12, mitochondrial (cox-13) from Neurospora crassa (strain ATCC 24698 / 74-OR23-1A / CBS 708.71 / DSM 1257 / FGSC 987).